The following is a 796-amino-acid chain: Ent-copalyl diphosphate synthase 4 (796 aa).

Residues 1–23 (MSSSSIVTSLLRPTTAADGVLPR) constitute a chloroplast transit peptide. Lys-240 is a substrate binding site. Residues Asp-371 and Asp-373 each contribute to the Mg(2+) site. The short motif at 371–374 (DVDD) is the DXDD motif element. Lys-457 contributes to the substrate binding site.

The protein belongs to the terpene synthase family. Tpsc subfamily. Mg(2+) serves as cofactor. Highly expressed in leaves, and, at low levels, in stems, but barely in roots and flowers.

Its subcellular location is the plastid. The protein resides in the chloroplast. It catalyses the reaction (2E,6E,10E)-geranylgeranyl diphosphate = ent-copalyl diphosphate. It participates in secondary metabolite biosynthesis; terpenoid biosynthesis. Its function is as follows. Involved in the biosynthesis of ent-kaurene diterpenoids natural products such as oridonin, miltiradiene, eriocalyxin B and nezukol, known to exhibit antitumor, anti-inflammatory and antibacterial activities. Catalyzes the conversion of (2E,6E,10E)-geranylgeranyl diphosphate (GGPP) to ent-copalyl diphosphate (ent-CPP). This is Ent-copalyl diphosphate synthase 4 from Isodon rubescens (Rabdosia rubescens).